Here is a 321-residue protein sequence, read N- to C-terminus: Malate dehydrogenase (321 aa).

NAD(+) contacts are provided by residues 10–15 (GAGQIG) and D34. 2 residues coordinate substrate: R83 and R89. Residues N96 and 119–121 (ITN) contribute to the NAD(+) site. 2 residues coordinate substrate: N121 and R152. H176 (proton acceptor) is an active-site residue.

The protein belongs to the LDH/MDH superfamily. MDH type 3 family.

The enzyme catalyses (S)-malate + NAD(+) = oxaloacetate + NADH + H(+). Its function is as follows. Catalyzes the reversible oxidation of malate to oxaloacetate. The protein is Malate dehydrogenase of Xanthobacter autotrophicus (strain ATCC BAA-1158 / Py2).